The following is a 93-amino-acid chain: MPRSLKKGPFVDDHLLRKVISANEASSKNVIKTWSRRSMIIPAMLGHTIAVHDGRKHVPVFVTESMVGHKLGEFALTRTFRGHVKDDKKGRRR.

Belongs to the universal ribosomal protein uS19 family.

In terms of biological role, protein S19 forms a complex with S13 that binds strongly to the 16S ribosomal RNA. This Clavibacter michiganensis subsp. michiganensis (strain NCPPB 382) protein is Small ribosomal subunit protein uS19.